We begin with the raw amino-acid sequence, 527 residues long: Peptide chain release factor 3 (527 aa).

The 268-residue stretch at 11 to 278 (AKRRTFAIIS…GFVEWAPAPL (268 aa)) folds into the tr-type G domain. GTP is bound by residues 20–27 (SHPDAGKT), 87–91 (DTPGH), and 141–144 (NKMD).

The protein belongs to the TRAFAC class translation factor GTPase superfamily. Classic translation factor GTPase family. PrfC subfamily.

It is found in the cytoplasm. Increases the formation of ribosomal termination complexes and stimulates activities of RF-1 and RF-2. It binds guanine nucleotides and has strong preference for UGA stop codons. It may interact directly with the ribosome. The stimulation of RF-1 and RF-2 is significantly reduced by GTP and GDP, but not by GMP. This is Peptide chain release factor 3 from Teredinibacter turnerae (strain ATCC 39867 / T7901).